The primary structure comprises 148 residues: FAD synthase (148 aa).

ATP is bound by residues 14 to 15 (TF), 19 to 22 (HPGH), and Asp97.

Belongs to the archaeal FAD synthase family. In terms of assembly, homodimer. A divalent metal cation is required as a cofactor.

It catalyses the reaction FMN + ATP + H(+) = FAD + diphosphate. It participates in cofactor biosynthesis; FAD biosynthesis; FAD from FMN: step 1/1. Catalyzes the transfer of the AMP portion of ATP to flavin mononucleotide (FMN) to produce flavin adenine dinucleotide (FAD) coenzyme. In Natrialba magadii (strain ATCC 43099 / DSM 3394 / CCM 3739 / CIP 104546 / IAM 13178 / JCM 8861 / NBRC 102185 / NCIMB 2190 / MS3) (Natronobacterium magadii), this protein is FAD synthase.